The sequence spans 94 residues: Adaptation to cold protein J (94 aa).

The 91-residue stretch at 3 to 93 folds into the J domain; sequence NHFSVLGIKP…AMRELWDQFY (91 aa). Residues 74–94 are essential for interaction with AtcC; it reads NNVIVTDPNSAMRELWDQFYP.

As to quaternary structure, interacts via its C-terminal extension with AtcC. Does not interact with AtcA and AtcB.

Its function is as follows. Involved in cold adaptation. The J-domain is functional and can stimulate the ATPase activity of the DnaK chaperone. May work as a co-chaperone of the DnaK system to support cold resistance. This chain is Adaptation to cold protein J, found in Shewanella oneidensis (strain ATCC 700550 / JCM 31522 / CIP 106686 / LMG 19005 / NCIMB 14063 / MR-1).